Here is a 236-residue protein sequence, read N- to C-terminus: Endo-1,4-beta-xylanase 3 (236 aa).

The N-terminal stretch at 1 to 45 (MQILTWALAALAAIPAVTAAPVETVEASSMDELVERSPNVTLVAR) is a signal peptide. Residues Asn39 and Asn106 are each glycosylated (N-linked (GlcNAc...) asparagine). Positions 46–236 (GTPSSTGTHN…SSGSASMTVR (191 aa)) constitute a GH11 domain. Glu131 functions as the Nucleophile in the catalytic mechanism. Glu223 serves as the catalytic Proton donor.

Belongs to the glycosyl hydrolase 11 (cellulase G) family.

The protein resides in the secreted. It carries out the reaction Endohydrolysis of (1-&gt;4)-beta-D-xylosidic linkages in xylans.. It functions in the pathway glycan degradation; xylan degradation. Its function is as follows. Endo-1,4-beta-xylanase involved in the hydrolysis of xylan, a major structural heterogeneous polysaccharide found in plant biomass representing the second most abundant polysaccharide in the biosphere, after cellulose. In Pyricularia grisea (Crabgrass-specific blast fungus), this protein is Endo-1,4-beta-xylanase 3 (XYL3).